The chain runs to 126 residues: Large ribosomal subunit protein bL12 (126 aa).

This sequence belongs to the bacterial ribosomal protein bL12 family. In terms of assembly, homodimer. Part of the ribosomal stalk of the 50S ribosomal subunit. Forms a multimeric L10(L12)X complex, where L10 forms an elongated spine to which 2 to 4 L12 dimers bind in a sequential fashion. Binds GTP-bound translation factors.

Forms part of the ribosomal stalk which helps the ribosome interact with GTP-bound translation factors. Is thus essential for accurate translation. The protein is Large ribosomal subunit protein bL12 of Paracidovorax citrulli (strain AAC00-1) (Acidovorax citrulli).